The sequence spans 430 residues: Endo-beta-1,4-glucanase celB (430 aa).

A signal peptide spans 1–16 (MALLLSLSLLATTISA). 2 N-linked (GlcNAc...) asparagine glycosylation sites follow: N43 and N153. Catalysis depends on E216, which acts as the Nucleophile. The Proton donor role is filled by E221. Residue N395 is glycosylated (N-linked (GlcNAc...) asparagine).

This sequence belongs to the glycosyl hydrolase 7 (cellulase C) family.

The protein resides in the secreted. It catalyses the reaction Endohydrolysis of (1-&gt;4)-beta-D-glucosidic linkages in cellulose, lichenin and cereal beta-D-glucans.. Has endoglucanase activity on substrates containing beta-1,4 glycosidic bonds, like in carboxymethylcellulose (CMC), hydroxyethylcellulose (HEC) and beta-glucan. Involved in the degradation of complex natural cellulosic substrates. The polypeptide is Endo-beta-1,4-glucanase celB (celB) (Emericella nidulans (strain FGSC A4 / ATCC 38163 / CBS 112.46 / NRRL 194 / M139) (Aspergillus nidulans)).